The chain runs to 1048 residues: 3-hydroxy-3-methylglutaryl-coenzyme A reductase (1048 aa).

The Cytoplasmic segment spans residues 1-32 (MDPVVRKPDPGGVQHRVTKALRAIVGHACRHP). Residues 33–53 (IHTLLVTALTAATTHLHVLEG) traverse the membrane as a helical segment. The Lumenal portion of the chain corresponds to 54–220 (TYQATHRGLA…FLHRVHHAET (167 aa)). A helical membrane pass occupies residues 221–241 (VDLVIIGLSYLAMNMTVVSLF). Residues 222–403 (DLVIIGLSYL…FTFYATILCV (182 aa)) enclose the SSD domain. At 242–250 (RVMRHLGSR) the chain is on the cytoplasmic side. The chain crosses the membrane as a helical span at residues 251–271 (FWLAASVLLSGAFAFVLGLGI). Residues 272–276 (TTTCD) are Lumenal-facing. The helical transmembrane segment at 277 to 297 (VPVDMLLLFEGIPYLVLTVGF) threads the bilayer. Residues 298–348 (EKPIQLTRAVLCVSEELWGGGQRQVPNGASSDDSRQNQLIPNIIQLAVDRE) lie on the Cytoplasmic side of the membrane. The chain crosses the membrane as a helical span at residues 349-369 (GWYIVRSYLLEIGALALGAVL). Topologically, residues 370–377 (RPKDSLGH) are lumenal. The helical transmembrane segment at 378-398 (FCFLAAWTLLIDAVLLFTFYA) threads the bilayer. The Cytoplasmic portion of the chain corresponds to 399 to 439 (TILCVKLEITRIRSPGGLGQVNAKHPSGIFGHKVKSTNITW). The helical transmembrane segment at 440-460 (WKLLTVGGFVLCHFLQLSPFF) threads the bilayer. Residues 461-542 (YRVMGEYMAN…LDGLESPLGR (82 aa)) lie on the Lumenal side of the membrane. 2 N-linked (GlcNAc...) asparagine glycosylation sites follow: asparagine 470 and asparagine 520. The chain crosses the membrane as a helical span at residues 543-563 (LCLMGALVVSLVLNNHLIHAA). At 564-1048 (RWHAWPQARE…NRSAGATVKK (485 aa)) the chain is on the cytoplasmic side. The Charge relay system role is filled by glutamate 729. 735 to 741 (SASRGCK) lines the CoA pocket. Residues 796-798 (SRF) and 823-831 (DAMGMNMIS) each bind NADP(+). Lysine 863 functions as the Charge relay system in the catalytic mechanism. Residue 892-894 (VLK) participates in CoA binding. Aspartate 939 functions as the Charge relay system in the catalytic mechanism. CoA is bound at residue 1034–1035 (AH). Catalysis depends on histidine 1035, which acts as the Proton donor. Residue 1039–1040 (NR) participates in NADP(+) binding.

It belongs to the HMG-CoA reductase family.

It localises to the endoplasmic reticulum membrane. The catalysed reaction is (R)-mevalonate + 2 NADP(+) + CoA = (3S)-3-hydroxy-3-methylglutaryl-CoA + 2 NADPH + 2 H(+). Its pathway is metabolic intermediate biosynthesis; (R)-mevalonate biosynthesis; (R)-mevalonate from acetyl-CoA: step 3/3. In terms of biological role, HMG-CoA reductase; part of the first module of ergosterol biosynthesis pathway that includes the early steps of the pathway, conserved across all eukaryotes, and which results in the formation of mevalonate from acetyl-coenzyme A (acetyl-CoA). In this module, the cytosolic acetyl-CoA acetyltransferase catalyzes the formation of acetoacetyl-CoA. The hydroxymethylglutaryl-CoA synthase then condenses acetyl-CoA with acetoacetyl-CoA to form HMG-CoA. The rate-limiting step of the early module is the reduction to mevalonate by the 3-hydroxy-3-methylglutaryl-coenzyme A (HMG-CoA) reductase. The protein is 3-hydroxy-3-methylglutaryl-coenzyme A reductase of Aspergillus terreus.